Consider the following 884-residue polypeptide: Valine--tRNA ligase (884 aa).

The 'HIGH' region signature appears at 46-56 (PNVTGKLHLGH). Residues 520–524 (KMSKS) carry the 'KMSKS' region motif. ATP is bound at residue lysine 523. The stretch at 809–844 (LADLLNVEEELARLEKELAKWQKELNMVGKKLSNER) forms a coiled coil.

Belongs to the class-I aminoacyl-tRNA synthetase family. ValS type 1 subfamily. As to quaternary structure, monomer.

It localises to the cytoplasm. The catalysed reaction is tRNA(Val) + L-valine + ATP = L-valyl-tRNA(Val) + AMP + diphosphate. Functionally, catalyzes the attachment of valine to tRNA(Val). As ValRS can inadvertently accommodate and process structurally similar amino acids such as threonine, to avoid such errors, it has a 'posttransfer' editing activity that hydrolyzes mischarged Thr-tRNA(Val) in a tRNA-dependent manner. This chain is Valine--tRNA ligase, found in Streptococcus agalactiae serotype III (strain NEM316).